Reading from the N-terminus, the 228-residue chain is UPF0173 metal-dependent hydrolase PTH_1415 (228 aa).

The protein belongs to the UPF0173 family.

This chain is UPF0173 metal-dependent hydrolase PTH_1415, found in Pelotomaculum thermopropionicum (strain DSM 13744 / JCM 10971 / SI).